The following is a 771-amino-acid chain: Assimilatory nitrate reductase electron transfer subunit (771 aa).

Residue 43 to 79 (YNRILLSSVLQGEASLDDITLNSKDWYDKHGITLYTG) participates in FAD binding. Residues Cys414, Cys416, Cys449, and Cys452 each coordinate [2Fe-2S] cluster.

Requires FAD as cofactor. It depends on [2Fe-2S] cluster as a cofactor.

Functionally, required for nitrate assimilation. This Bacillus subtilis (strain 168) protein is Assimilatory nitrate reductase electron transfer subunit (nasB).